The chain runs to 367 residues: Phosphoribosylaminoimidazole-succinocarboxamide synthase (367 aa).

It belongs to the SAICAR synthetase family.

The catalysed reaction is 5-amino-1-(5-phospho-D-ribosyl)imidazole-4-carboxylate + L-aspartate + ATP = (2S)-2-[5-amino-1-(5-phospho-beta-D-ribosyl)imidazole-4-carboxamido]succinate + ADP + phosphate + 2 H(+). Its pathway is purine metabolism; IMP biosynthesis via de novo pathway; 5-amino-1-(5-phospho-D-ribosyl)imidazole-4-carboxamide from 5-amino-1-(5-phospho-D-ribosyl)imidazole-4-carboxylate: step 1/2. This Vibrio atlanticus (strain LGP32) (Vibrio splendidus (strain Mel32)) protein is Phosphoribosylaminoimidazole-succinocarboxamide synthase.